The primary structure comprises 234 residues: Ribonuclease 3 (234 aa).

An RNase III domain is found at 4–133 (LLDLEHKLNY…ILGAVYIDSN (130 aa)). Residue glutamate 46 participates in Mg(2+) binding. Aspartate 50 is a catalytic residue. Positions 119 and 122 each coordinate Mg(2+). Residue glutamate 122 is part of the active site. The 69-residue stretch at 160 to 228 (DFKSILQEYV…AKALCIKLGV (69 aa)) folds into the DRBM domain.

This sequence belongs to the ribonuclease III family. Homodimer. Requires Mg(2+) as cofactor.

It is found in the cytoplasm. It carries out the reaction Endonucleolytic cleavage to 5'-phosphomonoester.. In terms of biological role, digests double-stranded RNA. Involved in the processing of primary rRNA transcript to yield the immediate precursors to the large and small rRNAs (23S and 16S). Processes some mRNAs, and tRNAs when they are encoded in the rRNA operon. Processes pre-crRNA and tracrRNA of type II CRISPR loci if present in the organism. This is Ribonuclease 3 from Fusobacterium nucleatum subsp. nucleatum (strain ATCC 25586 / DSM 15643 / BCRC 10681 / CIP 101130 / JCM 8532 / KCTC 2640 / LMG 13131 / VPI 4355).